Here is a 1415-residue protein sequence, read N- to C-terminus: DNA-directed RNA polymerase subunit beta' (1415 aa).

Zn(2+)-binding residues include Cys-214, Cys-294, Cys-301, and Cys-304. Residues 1335-1351 (QNFVDSQGKPQSQSSFI) are compositionally biased toward polar residues. Residues 1335–1390 (QNFVDSQGKPQSQSSFIDDSMSEFSPVKDKSGSVLDDSDFPPGNFDSDFPADNYDL) are disordered.

The protein belongs to the RNA polymerase beta' chain family. RpoC2 subfamily. As to quaternary structure, in cyanobacteria the RNAP catalytic core is composed of 2 alpha, 1 beta, 1 beta', 1 gamma and 1 omega subunit. When a sigma factor is associated with the core the holoenzyme is formed, which can initiate transcription. Requires Zn(2+) as cofactor.

The enzyme catalyses RNA(n) + a ribonucleoside 5'-triphosphate = RNA(n+1) + diphosphate. DNA-dependent RNA polymerase catalyzes the transcription of DNA into RNA using the four ribonucleoside triphosphates as substrates. The chain is DNA-directed RNA polymerase subunit beta' from Trichodesmium erythraeum (strain IMS101).